A 281-amino-acid polypeptide reads, in one-letter code: MGIKTFNPYTPSRRHMTGSDFAEITTSTPEKSLVVSLKKNAGRNNQGKITVRHQGGGSRRKYRIIDFKRKKDGISAVVKTIEYDPNRTANIALICYADGEKAYILAPNGLQVGQTVMNGATAEIKVGNCLPLANIPVGSQIHNIELYPGKGGQLVRSAGNSAQLMAREGKYATLRLPSGEMRMVPISCRATLGQVGNIDHELVTLGKAGRVRHMGIRPTVRGSVMNPNDHPHGGGEGKTGIGRPGPVTPWGKPALGLKTRKKNKQSNKMIMRRRDGKALSK.

Positions 220–281 (VRGSVMNPND…RRRDGKALSK (62 aa)) are disordered. A compositionally biased stretch (basic residues) spans 258 to 271 (KTRKKNKQSNKMIM). Residues 272 to 281 (RRRDGKALSK) show a composition bias toward basic and acidic residues.

The protein belongs to the universal ribosomal protein uL2 family. Part of the 50S ribosomal subunit. Forms a bridge to the 30S subunit in the 70S ribosome.

Functionally, one of the primary rRNA binding proteins. Required for association of the 30S and 50S subunits to form the 70S ribosome, for tRNA binding and peptide bond formation. It has been suggested to have peptidyltransferase activity; this is somewhat controversial. Makes several contacts with the 16S rRNA in the 70S ribosome. In Lachnoclostridium phytofermentans (strain ATCC 700394 / DSM 18823 / ISDg) (Clostridium phytofermentans), this protein is Large ribosomal subunit protein uL2.